The primary structure comprises 317 residues: Ciliary microtubule inner protein 2A (317 aa).

The tract at residues 131–153 (TPDTPHPPCPPGRKGDSRDLGHP) is disordered.

The protein belongs to the CIMIP2 family. In terms of assembly, microtubule inner protein component of sperm flagellar doublet microtubules.

The protein resides in the cytoplasm. It localises to the cytoskeleton. The protein localises to the flagellum axoneme. Microtubule inner protein (MIP) part of the dynein-decorated doublet microtubules (DMTs) in flagellum axoneme. Binds to the intra-tubulin interfaces. In Homo sapiens (Human), this protein is Ciliary microtubule inner protein 2A.